The primary structure comprises 220 residues: Kinetochore protein Spc25 (220 aa).

Positions 79–114 (HLTQEVEAIKLRNLAMKDQIKQQKMLNNQRKNEIME) form a coiled coil.

It belongs to the SPC25 family. As to quaternary structure, component of the Ndc80 complex, which is composed of Ndc80, Nuf2 and Spc25.

It is found in the nucleus. The protein resides in the chromosome. It localises to the centromere. Its subcellular location is the kinetochore. Its function is as follows. Acts as a component of the essential kinetochore-associated Ndc80 complex, which is required for chromosome segregation and spindle checkpoint activity during meiosis and mitosis. Required for kinetochore integrity and the organization of stable microtubule binding sites in the outer plate of the kinetochore. Participates in SAC signaling that responds specifically to disruptions in spindle microtubule dynamics. The NDC80 complex synergistically enhances the affinity of the SKA1 complex for microtubules and may allow the NDC80 complex to track depolymerizing microtubules. The sequence is that of Kinetochore protein Spc25 from Drosophila orena (Fruit fly).